The following is a 253-amino-acid chain: UPF0246 protein LBA1843 (253 aa).

Belongs to the UPF0246 family.

In Lactobacillus acidophilus (strain ATCC 700396 / NCK56 / N2 / NCFM), this protein is UPF0246 protein LBA1843.